The primary structure comprises 1048 residues: Anguibactin system regulator (1048 aa).

Positions 965–1039 (PIITASEDRV…AFAIIMDRCR (75 aa)) constitute a Carrier domain.

Belongs to the ATP-dependent AMP-binding enzyme family.

Its pathway is siderophore biosynthesis; anguibactin biosynthesis. In terms of biological role, bifunctional protein that plays an essential role in virulence. Plays a role in both production of the siderophore anguibactin and regulation of iron transport genes. This is Anguibactin system regulator (angR) from Vibrio anguillarum (strain ATCC 68554 / 775) (Listonella anguillarum).